The primary structure comprises 140 residues: Putative nickel-responsive regulator (140 aa).

H81, H92, H94, and C100 together coordinate Ni(2+).

Belongs to the transcriptional regulatory CopG/NikR family. It depends on Ni(2+) as a cofactor.

Transcriptional regulator. In Methanococcoides burtonii (strain DSM 6242 / NBRC 107633 / OCM 468 / ACE-M), this protein is Putative nickel-responsive regulator.